Reading from the N-terminus, the 485-residue chain is Probable coniferyl aldehyde dehydrogenase (485 aa).

Residues Glu-226 and Cys-260 contribute to the active site.

It belongs to the aldehyde dehydrogenase family.

It catalyses the reaction (E)-coniferaldehyde + NADP(+) + H2O = (E)-ferulate + NADPH + 2 H(+). It carries out the reaction (E)-coniferaldehyde + NAD(+) + H2O = (E)-ferulate + NADH + 2 H(+). The polypeptide is Probable coniferyl aldehyde dehydrogenase (calB) (Caulobacter vibrioides (strain ATCC 19089 / CIP 103742 / CB 15) (Caulobacter crescentus)).